Reading from the N-terminus, the 414-residue chain is Carboxynorspermidine synthase (414 aa).

This sequence belongs to the saccharopine dehydrogenase family. Carboxynorspermidine synthase subfamily. Homodimer.

The catalysed reaction is carboxynorspermidine + NADP(+) + H2O = L-aspartate 4-semialdehyde + propane-1,3-diamine + NADPH + H(+). It catalyses the reaction carboxyspermidine + NADP(+) + H2O = L-aspartate 4-semialdehyde + putrescine + NADPH + H(+). Its activity is regulated as follows. Activated by dithiothreitol and inhibited by SH-reactive compounds. Functionally, involved in norspermidine biosynthesis. Catalyzes the synthesis of carboxynorspermidine from L-aspartate 4-semialdehyde and 1,3-diaminopropane. Is also slightly active with putrescine as a substrate. This Vibrio alginolyticus (strain ATCC 17749 / DSM 2171 / NBRC 15630 / NCIMB 1903 / NCTC 12160 / XII-53) protein is Carboxynorspermidine synthase.